The chain runs to 267 residues: Small ribosomal subunit protein uS3 (267 aa).

The KH type-2 domain maps to 43-111; that stretch reads IRKAMSKDLE…QVQLNIFEVK (69 aa). Positions 216–267 are disordered; that stretch reads FEEQQAQQSNNRQGRRGDRRPRRGQRNAAPQQNAAAEAPAAAEAPAATETKE. Over residues 228–240 the composition is skewed to basic residues; sequence QGRRGDRRPRRGQ. Residues 241-267 show a composition bias toward low complexity; that stretch reads RNAAPQQNAAAEAPAAAEAPAATETKE.

It belongs to the universal ribosomal protein uS3 family. As to quaternary structure, part of the 30S ribosomal subunit. Forms a tight complex with proteins S10 and S14.

Binds the lower part of the 30S subunit head. Binds mRNA in the 70S ribosome, positioning it for translation. The protein is Small ribosomal subunit protein uS3 of Bifidobacterium adolescentis (strain ATCC 15703 / DSM 20083 / NCTC 11814 / E194a).